Reading from the N-terminus, the 388-residue chain is MGRVGVLLLNLGGPDKLEDVGPFLYNLFSDPEIIRLPFRWLQKPLAWFIASRRTRTSQQNYKQIGGGSPLRRITEAQGEALKKQLGYLGQEANIYVGMRYWHPYTEEAIAQITQDNIEHLVILPLYPQFSISTSGSSFRLLDKLWQEEPKLQPIEYTVIPSWYKQPGYLQAMAELIAQELEQFPNPDEVHIFFSAHGVPKSYVEEAGDPYQQEIEECTALIMQTLNRPNAHTLAYQSRVGPVEWLQPYTEDALKELGAQGVKDLVVVPISFVSEHIETLQEIDIEYREVAEESGIHNFRRVPAPNTHPVFINALAELVIDALKNPSFKLSQAAQMKKMVKMYPQERWEWGLTTSAEVWNGRIAMLGFIALIIELITGHGFLHMIGLLQ.

Fe cation-binding residues include histidine 196 and glutamate 277.

Belongs to the ferrochelatase family.

The protein resides in the cytoplasm. The enzyme catalyses heme b + 2 H(+) = protoporphyrin IX + Fe(2+). Its pathway is porphyrin-containing compound metabolism; protoheme biosynthesis; protoheme from protoporphyrin-IX: step 1/1. Catalyzes the ferrous insertion into protoporphyrin IX. The protein is Ferrochelatase of Nostoc punctiforme (strain ATCC 29133 / PCC 73102).